Reading from the N-terminus, the 141-residue chain is Large ribosomal subunit protein uL11 (141 aa).

This sequence belongs to the universal ribosomal protein uL11 family. In terms of assembly, part of the ribosomal stalk of the 50S ribosomal subunit. Interacts with L10 and the large rRNA to form the base of the stalk. L10 forms an elongated spine to which L12 dimers bind in a sequential fashion forming a multimeric L10(L12)X complex. In terms of processing, one or more lysine residues are methylated.

In terms of biological role, forms part of the ribosomal stalk which helps the ribosome interact with GTP-bound translation factors. This chain is Large ribosomal subunit protein uL11, found in Streptococcus gordonii (strain Challis / ATCC 35105 / BCRC 15272 / CH1 / DL1 / V288).